The chain runs to 890 residues: Translation initiation factor IF-2 (890 aa).

Residues 45–304 (LIDHLNQKNS…LQQGFQKPAQ (260 aa)) are disordered. Over residues 67-81 (STLNIPGTGGKSKSV) the composition is skewed to polar residues. Residues 92 to 217 (VKRDPQEAER…RMAEENKWTD (126 aa)) are compositionally biased toward basic and acidic residues. The span at 252 to 266 (GRGRNAKAARPKKGN) shows a compositional bias: basic residues. Residues 267–280 (KHAESKADREEARA) show a composition bias toward basic and acidic residues. Residues 389–558 (PRAPVVTIMG…LLQAEVLELK (170 aa)) form the tr-type G domain. Positions 398-405 (GHVDHGKT) are G1. A GTP-binding site is contributed by 398–405 (GHVDHGKT). Residues 423 to 427 (GITQH) form a G2 region. The tract at residues 444 to 447 (DTPG) is G3. GTP is bound by residues 444-448 (DTPGH) and 498-501 (NKID). The tract at residues 498–501 (NKID) is G4. Residues 534–536 (SAK) form a G5 region. Residue Lys808 is modified to N6-acetyllysine.

It belongs to the TRAFAC class translation factor GTPase superfamily. Classic translation factor GTPase family. IF-2 subfamily.

The protein resides in the cytoplasm. Functionally, one of the essential components for the initiation of protein synthesis. Protects formylmethionyl-tRNA from spontaneous hydrolysis and promotes its binding to the 30S ribosomal subunits. Also involved in the hydrolysis of GTP during the formation of the 70S ribosomal complex. This Shigella sonnei (strain Ss046) protein is Translation initiation factor IF-2.